A 220-amino-acid chain; its full sequence is Adenylate kinase (220 aa).

10-15 (GSGKST) is an ATP binding site. The interval 30–59 (ASGDIIRAEIKARTPLGIEMERYLSRGDLI) is NMP. Residues Arg36, 57–59 (DLI), 83–86 (GYPR), and Gln90 each bind AMP. The tract at residues 124 to 161 (GRRICSKCGAVYHVEFNPPKVPGKCDICGGELIQRPDD) is LID. Arg125 contributes to the ATP binding site. Cys128 and Cys131 together coordinate Zn(2+). 134–135 (VY) contributes to the ATP binding site. The Zn(2+) site is built by Cys148 and Cys151. 2 residues coordinate AMP: Arg158 and Arg169. Residue Gly197 coordinates ATP.

Belongs to the adenylate kinase family. Monomer.

It is found in the cytoplasm. It carries out the reaction AMP + ATP = 2 ADP. Its pathway is purine metabolism; AMP biosynthesis via salvage pathway; AMP from ADP: step 1/1. In terms of biological role, catalyzes the reversible transfer of the terminal phosphate group between ATP and AMP. Plays an important role in cellular energy homeostasis and in adenine nucleotide metabolism. This Pyrococcus abyssi (strain GE5 / Orsay) protein is Adenylate kinase.